The chain runs to 196 residues: Potassium-transporting ATPase KdpC subunit (196 aa).

Residues 7 to 27 (PAIVSAGLFTVLLGLAYPLAV) form a helical membrane-spanning segment.

Belongs to the KdpC family. In terms of assembly, the system is composed of three essential subunits: KdpA, KdpB and KdpC.

It localises to the cell inner membrane. Part of the high-affinity ATP-driven potassium transport (or Kdp) system, which catalyzes the hydrolysis of ATP coupled with the electrogenic transport of potassium into the cytoplasm. This subunit acts as a catalytic chaperone that increases the ATP-binding affinity of the ATP-hydrolyzing subunit KdpB by the formation of a transient KdpB/KdpC/ATP ternary complex. This is Potassium-transporting ATPase KdpC subunit from Caulobacter sp. (strain K31).